We begin with the raw amino-acid sequence, 169 residues long: Myosin regulatory light chain 11 (169 aa).

Ala2 is subject to N,N,N-trimethylalanine. 2 positions are modified to phosphoserine: Ser15 and Ser16. Phosphothreonine occurs at positions 25 and 35. Positions 25–60 constitute an EF-hand 1 domain; that stretch reads TQIQEFKEAFTVIDQNRDGIIDKEDLRDTFAAMGRL. Ca(2+) is bound by residues Asp38, Asn40, Asp42, and Asp49. At Ser75 the chain carries Phosphoserine. 2 consecutive EF-hand domains span residues 95 to 130 and 131 to 166; these read DPED…QCDR and FSQE…GDAK. Thr101 bears the Phosphothreonine mark.

Myosin is a hexamer of 2 heavy chains and 4 light chains. In terms of tissue distribution, expressed in fetal and adult skeletal muscle.

Myosin regulatory subunit that plays an essential role to maintain muscle integrity during early development. Plays a role in muscle contraction. The sequence is that of Myosin regulatory light chain 11 from Homo sapiens (Human).